A 520-amino-acid polypeptide reads, in one-letter code: Cytochrome P450 monooxygenase 98 (520 aa).

A helical transmembrane segment spans residues 7–27 (MLNNNLLIVIGTFAVCVYIVL). Cysteine 445 is a binding site for heme.

It belongs to the cytochrome P450 family. Requires heme as cofactor.

The protein resides in the membrane. Its pathway is secondary metabolite biosynthesis. In terms of biological role, cytochrome P450 monooxygenase that is able to use pyrene, phenanthrene, 3,5-dimethoxy-trans-stilbene and 3,5,4'-trimethoxy-trans-stilbene as substrates for oxidation. The polypeptide is Cytochrome P450 monooxygenase 98 (Postia placenta (strain ATCC 44394 / Madison 698-R) (Brown rot fungus)).